We begin with the raw amino-acid sequence, 180 residues long: ATP synthase subunit delta (180 aa).

The protein belongs to the ATPase delta chain family. In terms of assembly, F-type ATPases have 2 components, F(1) - the catalytic core - and F(0) - the membrane proton channel. F(1) has five subunits: alpha(3), beta(3), gamma(1), delta(1), epsilon(1). F(0) has three main subunits: a(1), b(2) and c(10-14). The alpha and beta chains form an alternating ring which encloses part of the gamma chain. F(1) is attached to F(0) by a central stalk formed by the gamma and epsilon chains, while a peripheral stalk is formed by the delta and b chains.

It is found in the cell membrane. Its function is as follows. F(1)F(0) ATP synthase produces ATP from ADP in the presence of a proton or sodium gradient. F-type ATPases consist of two structural domains, F(1) containing the extramembraneous catalytic core and F(0) containing the membrane proton channel, linked together by a central stalk and a peripheral stalk. During catalysis, ATP synthesis in the catalytic domain of F(1) is coupled via a rotary mechanism of the central stalk subunits to proton translocation. Functionally, this protein is part of the stalk that links CF(0) to CF(1). It either transmits conformational changes from CF(0) to CF(1) or is implicated in proton conduction. This Latilactobacillus sakei subsp. sakei (strain 23K) (Lactobacillus sakei subsp. sakei) protein is ATP synthase subunit delta.